The following is a 107-amino-acid chain: Replication restart protein PriB (107 aa).

Residues 8 to 107 enclose the SSB domain; sequence IENRLSLIGV…LHAEHIELLD (100 aa).

Belongs to the PriB family. In terms of assembly, homodimer. Interacts with PriA and DnaT. Component of the replication restart primosome. Primosome assembly occurs via a 'hand-off' mechanism. PriA binds to replication forks, subsequently PriB then DnaT bind; DnaT then displaces ssDNA to generate the helicase loading substrate.

Involved in the restart of stalled replication forks, which reloads the replicative helicase on sites other than the origin of replication; the PriA-PriB pathway is the major replication restart pathway. During primosome assembly it facilitates complex formation between PriA and DnaT on DNA; stabilizes PriA on DNA. Stimulates the DNA unwinding activity of PriA helicase. This is Replication restart protein PriB from Actinobacillus succinogenes (strain ATCC 55618 / DSM 22257 / CCUG 43843 / 130Z).